Reading from the N-terminus, the 633-residue chain is NBPF family member NBPF3 (633 aa).

The tract at residues 15-52 (RGPDVETSPFGAPRAASHGVGRHQELRDPTVPGPTSSA) is disordered. Residues 127-186 (LRDERLLTEEKLAEELGQAEELRQYKVLVHSQERELTQLREKLQEGRDASRSLNQHLQAL) adopt a coiled-coil conformation. 5 consecutive Olduvai domains span residues 221-313 (ENDD…CIIP), 314-402 (ENES…ATSP), 405-460 (SREL…LDLD), 461-552 (RMKK…PPCP), and 555-633 (NEVL…IFPH). The span at 316 to 326 (ESDHEQEEEKG) shows a compositional bias: basic and acidic residues. A disordered region spans residues 316–370 (ESDHEQEEEKGPVSPRNLQESEEEEAPQESWDEGDWTLSIPPDMSASYQSDRSTF). Positions 335–350 (ESEEEEAPQESWDEGD) are enriched in acidic residues. A disordered region spans residues 463–484 (KKDQEEEEDQGPPCPRLSRELP).

This sequence belongs to the NBPF family. As to expression, expressed in testis and fetal heart, as well as in non small cell lung carcinoma and neuroblastoma cell line.

The protein resides in the cytoplasm. This chain is NBPF family member NBPF3, found in Homo sapiens (Human).